The primary structure comprises 99 residues: ATP synthase subunit c (99 aa).

Helical transmembrane passes span 23–43 and 78–98; these read GAGI…IGAL and MGIA…LIFV.

It belongs to the ATPase C chain family. F-type ATPases have 2 components, F(1) - the catalytic core - and F(0) - the membrane proton channel. F(1) has five subunits: alpha(3), beta(3), gamma(1), delta(1), epsilon(1). F(0) has three main subunits: a(1), b(2) and c(10-14). The alpha and beta chains form an alternating ring which encloses part of the gamma chain. F(1) is attached to F(0) by a central stalk formed by the gamma and epsilon chains, while a peripheral stalk is formed by the delta and b chains.

Its subcellular location is the cell membrane. F(1)F(0) ATP synthase produces ATP from ADP in the presence of a proton or sodium gradient. F-type ATPases consist of two structural domains, F(1) containing the extramembraneous catalytic core and F(0) containing the membrane proton channel, linked together by a central stalk and a peripheral stalk. During catalysis, ATP synthesis in the catalytic domain of F(1) is coupled via a rotary mechanism of the central stalk subunits to proton translocation. In terms of biological role, key component of the F(0) channel; it plays a direct role in translocation across the membrane. A homomeric c-ring of between 10-14 subunits forms the central stalk rotor element with the F(1) delta and epsilon subunits. This Mycoplasma mobile (strain ATCC 43663 / 163K / NCTC 11711) (Mesomycoplasma mobile) protein is ATP synthase subunit c.